The primary structure comprises 50 residues: MKLPVQQVYSVYGGKDLPKGHSHSTMPFLSKLQFLTKIYLLDIHTQPFFI.

The chain is Bacteriocin-like protein SboX (sboX) from Bacillus subtilis (strain 168).